Here is a 235-residue protein sequence, read N- to C-terminus: Large ribosomal subunit protein uL1 (235 aa).

Belongs to the universal ribosomal protein uL1 family. In terms of assembly, part of the 50S ribosomal subunit.

Functionally, binds directly to 23S rRNA. The L1 stalk is quite mobile in the ribosome, and is involved in E site tRNA release. Its function is as follows. Protein L1 is also a translational repressor protein, it controls the translation of the L11 operon by binding to its mRNA. The chain is Large ribosomal subunit protein uL1 from Prochlorococcus marinus (strain MIT 9515).